The sequence spans 257 residues: Caspase-14 (257 aa).

Residues H93 and C136 contribute to the active site. A propeptide spanning residues 156–167 (DEELGGDEVAVL) is cleaved from the precursor.

Belongs to the peptidase C14A family. Heterodimer of a large and a small subunit, both processed from the precursor; the mature active form is a p17/p10 dimer and the intermediate form a p20/p8 dimer. In terms of processing, maturation by proteolytic processing appears to be a two-step process. The precursor is processed by KLK7 to yield the p20/p8 intermediate form which acts the precursor to yield the p17/p10 mature form. Initially it was reported that cleavage by granzyme B, caspase-8 and -10 generates the two active subunits, however the physiological relevance has not been established. As to expression, embryo, adult liver and less in adult brain and kidney. Expressed in differentiating keratinocytes of embryonic skin (at protein level). Expressed in keratinocytes of adult skin suprabasal layers (at protein level).

The protein resides in the cytoplasm. The protein localises to the nucleus. Functionally, non-apoptotic caspase which is involved in epidermal differentiation. Seems to play a role in keratinocyte differentiation and is required for cornification. Regulates maturation of the epidermis by proteolytically processing filaggrin. In vitro is equally active on the synthetic caspase substrates WEHD-ACF and IETD-AFC. Involved in processing of prosaposin in the epidermis. May be involved in retinal pigment epithelium cell barrier function. The sequence is that of Caspase-14 (Casp14) from Mus musculus (Mouse).